The following is a 306-amino-acid chain: D-alanine--D-alanine ligase (306 aa).

Residues Lys101–Glu300 form the ATP-grasp domain. Leu128 to Thr182 lines the ATP pocket. Residues Asp250, Glu267, and Asn269 each contribute to the Mg(2+) site.

The protein belongs to the D-alanine--D-alanine ligase family. Requires Mg(2+) as cofactor. The cofactor is Mn(2+).

The protein localises to the cytoplasm. The catalysed reaction is 2 D-alanine + ATP = D-alanyl-D-alanine + ADP + phosphate + H(+). It participates in cell wall biogenesis; peptidoglycan biosynthesis. Its function is as follows. Cell wall formation. This chain is D-alanine--D-alanine ligase, found in Azorhizobium caulinodans (strain ATCC 43989 / DSM 5975 / JCM 20966 / LMG 6465 / NBRC 14845 / NCIMB 13405 / ORS 571).